The chain runs to 311 residues: tRNA-cytidine(32) 2-sulfurtransferase (311 aa).

Residues 47–52 (SGGKDS) carry the PP-loop motif motif. [4Fe-4S] cluster is bound by residues Cys122, Cys125, and Cys213.

The protein belongs to the TtcA family. In terms of assembly, homodimer. It depends on Mg(2+) as a cofactor. The cofactor is [4Fe-4S] cluster.

The protein localises to the cytoplasm. The catalysed reaction is cytidine(32) in tRNA + S-sulfanyl-L-cysteinyl-[cysteine desulfurase] + AH2 + ATP = 2-thiocytidine(32) in tRNA + L-cysteinyl-[cysteine desulfurase] + A + AMP + diphosphate + H(+). Its pathway is tRNA modification. Functionally, catalyzes the ATP-dependent 2-thiolation of cytidine in position 32 of tRNA, to form 2-thiocytidine (s(2)C32). The sulfur atoms are provided by the cysteine/cysteine desulfurase (IscS) system. In Salmonella dublin (strain CT_02021853), this protein is tRNA-cytidine(32) 2-sulfurtransferase.